A 560-amino-acid chain; its full sequence is 5'-nucleotidase (560 aa).

Positions 1–21 (MNQRLIIKTALSAAILASLAG) are cleaved as a signal peptide. Residue Cys-22 is the site of N-palmitoyl cysteine attachment. Residue Cys-22 is the site of S-diacylglycerol cysteine attachment. Asp-45, His-47, Asp-88, Asn-120, His-221, His-256, and Gln-258 together coordinate a divalent metal cation. Residues Phe-432 and 501 to 507 (YNASGGD) contribute to the substrate site.

Belongs to the 5'-nucleotidase family. It depends on chloride as a cofactor. Requires Mg(2+) as cofactor.

It localises to the cell outer membrane. The catalysed reaction is a ribonucleoside 5'-phosphate + H2O = a ribonucleoside + phosphate. In terms of biological role, degradation of extracellular 5'-nucleotides for nutritional needs. The sequence is that of 5'-nucleotidase (nutA) from Vibrio parahaemolyticus serotype O3:K6 (strain RIMD 2210633).